Here is a 336-residue protein sequence, read N- to C-terminus: Dihydroorotate dehydrogenase (quinone) (336 aa).

FMN is bound by residues 62 to 66 (AGLDK) and threonine 86. Lysine 66 contributes to the substrate binding site. 111 to 115 (NRMGF) contributes to the substrate binding site. FMN-binding residues include asparagine 139 and asparagine 172. Position 172 (asparagine 172) interacts with substrate. Serine 175 (nucleophile) is an active-site residue. Asparagine 177 contacts substrate. FMN contacts are provided by lysine 217 and threonine 245. 246 to 247 (NT) lines the substrate pocket. FMN-binding positions include glycine 268, glycine 297, and 318 to 319 (YS).

The protein belongs to the dihydroorotate dehydrogenase family. Type 2 subfamily. As to quaternary structure, monomer. The cofactor is FMN.

The protein resides in the cell membrane. The catalysed reaction is (S)-dihydroorotate + a quinone = orotate + a quinol. It participates in pyrimidine metabolism; UMP biosynthesis via de novo pathway; orotate from (S)-dihydroorotate (quinone route): step 1/1. In terms of biological role, catalyzes the conversion of dihydroorotate to orotate with quinone as electron acceptor. In Escherichia coli O17:K52:H18 (strain UMN026 / ExPEC), this protein is Dihydroorotate dehydrogenase (quinone).